The following is a 510-amino-acid chain: Cytochrome P450 monooxygenase BOT1 (510 aa).

The chain crosses the membrane as a helical span at residues 16–36 (PLAWAALILASFTLYSVQLVV). Residue Cys-454 participates in heme binding. Asn-476 carries an N-linked (GlcNAc...) asparagine glycan.

The protein belongs to the cytochrome P450 family. It depends on heme as a cofactor.

The protein resides in the membrane. It functions in the pathway secondary metabolite biosynthesis. Functionally, cytochrome P450 monooxygenase; part of the gene cluster that mediates the biosynthesis of botrydial. Botrydial is necessary for colonization of plant tissue by the T4 strain. It is a strain-dependent virulence factor since highly aggressive strains like SAS56 or B05 still retain substantial virulence when botrydial synthesis is impaired, since they produce also botcinic acid. The first step of botrydial biosynthesis is performed by the sesquiterpene synthase BOT2 which catalyzes the cyclization of farnesyl diphosphate (FPP) to presilphiperfolan-8-beta-ol (PSP). The cytochrome P450 monooxygenase BOT4 then catalyzes the hydroxylation at C-4 to give a probotryane intermediate. Acetylation of the hydroxyl at C-4 is carried out by the acetyltransferase BOT5, followed by the combined action of the P450 monooxygenases BOT3 and BOT1, to yield finally the glycol, via the regio- and stereospecific hydroxylations at C-10 and C-15 of the probotryane intermediates, respectively. The cleavage of the C10-C15 bond of probotryane skeleton is an intriguing and chemically important reaction, which could be mediated by some of the monooxygenases or by a combination of them. It is possible that either BOT3 or BOT1 would oxidize either the 10- or the 15-hydroxy group to the hydroperoxide derivative, which would then undergo heterolytic fragmentation to give the dialdehyde botrydial. Finally, the dehydrogenase BOT7 might be involved in the conversion of botrydial to dihydrobotrydial. The polypeptide is Cytochrome P450 monooxygenase BOT1 (Botryotinia fuckeliana (Noble rot fungus)).